The sequence spans 997 residues: FIP1[III]-like protein (997 aa).

4 disordered regions span residues Ile250 to Val272, Ala289 to Gly475, Ser534 to Asp553, and Gln880 to Gln900. A compositionally biased stretch (polar residues) spans Ser261–Val272. Basic and acidic residues-rich tracts occupy residues Thr309–Ser323, Ser334–Arg346, Glu367–Glu379, and Arg388–Gly404. The Nuclear localization signal motif lies at Ile397–Gly404. Over residues Ser534–Ser547 the composition is skewed to polar residues. Residues Glu930–Lys963 are a coiled coil.

The protein belongs to the FIP1 family. As to quaternary structure, component of the cleavage and polyadenylation specificity factor (CPSF) complex. Forms a complex with cleavage and polyadenylation specificity factor (CPSF) subunits CLPS5, FIPS5, PAPS4, PCFS1, CSTF64 and CPSF30.

The protein resides in the nucleus. Its function is as follows. Component of the cleavage and polyadenylation specificity factor (CPSF) complex that plays a key role in pre-mRNA 3'-end formation, recognizing the AAUAAA signal sequence and interacting with poly(A) polymerase and other factors to bring about cleavage and poly(A) addition. FIP1L1 contributes to poly(A) site recognition and stimulates poly(A) addition. Binds to U-rich RNA sequence elements surrounding the poly(A) site. May act to tether poly(A) polymerase to the CPSF complex. The sequence is that of FIP1[III]-like protein from Arabidopsis thaliana (Mouse-ear cress).